Reading from the N-terminus, the 463-residue chain is Cysteine--tRNA ligase (463 aa).

Residue C27 coordinates Zn(2+). Positions 29 to 39 (MTVYDYCHLGH) match the 'HIGH' region motif. C208, H233, and E237 together coordinate Zn(2+). The 'KMSKS' region motif lies at 265–269 (KMSKS). K268 is a binding site for ATP.

The protein belongs to the class-I aminoacyl-tRNA synthetase family. In terms of assembly, monomer. Zn(2+) is required as a cofactor.

Its subcellular location is the cytoplasm. The enzyme catalyses tRNA(Cys) + L-cysteine + ATP = L-cysteinyl-tRNA(Cys) + AMP + diphosphate. This chain is Cysteine--tRNA ligase, found in Marinobacter nauticus (strain ATCC 700491 / DSM 11845 / VT8) (Marinobacter aquaeolei).